We begin with the raw amino-acid sequence, 335 residues long: Dihydroorotate dehydrogenase (quinone) (335 aa).

Residues 58–62 (AGADK) and Thr82 each bind FMN. Substrate is bound at residue Lys62. A substrate-binding site is contributed by 107 to 111 (NRNGF). The FMN site is built by Asn135 and Asn168. Residue Asn168 coordinates substrate. Catalysis depends on Ser171, which acts as the Nucleophile. Asn173 contacts substrate. Residues Lys213 and Gly241 each coordinate FMN. 242–243 (NT) serves as a coordination point for substrate. FMN contacts are provided by residues Gly264, Gly293, and 314–315 (YS).

It belongs to the dihydroorotate dehydrogenase family. Type 2 subfamily. As to quaternary structure, monomer. FMN is required as a cofactor.

The protein resides in the cell membrane. It catalyses the reaction (S)-dihydroorotate + a quinone = orotate + a quinol. It functions in the pathway pyrimidine metabolism; UMP biosynthesis via de novo pathway; orotate from (S)-dihydroorotate (quinone route): step 1/1. In terms of biological role, catalyzes the conversion of dihydroorotate to orotate with quinone as electron acceptor. In Haemophilus ducreyi (strain 35000HP / ATCC 700724), this protein is Dihydroorotate dehydrogenase (quinone).